The sequence spans 486 residues: NADH-quinone oxidoreductase subunit N (486 aa).

14 consecutive transmembrane segments (helical) span residues 11-31 (ALPEIVLLIAVSAILIIDLFV), 44-64 (MLALVATGAATLAAWLPYPVL), 74-94 (PIASVAKLGLVVATGVAMIYA), 103-123 (FLKGELFTLMLFALLGMCVMV), 128-148 (MLTLYIGLELLSLALYALIAL), 163-183 (FVLGALASGLLLYGVSMVYGG), 206-226 (VSLGLVFIVAGLAFKLGAVPF), 238-258 (PTAVTLFVGSAPKLAAFVFVI), 267-287 (PAAVAWQPMLILLAIASLVVG), 300-320 (MLAYSTISHMGFMLIGILAAT), 328-348 (MFYAITYMLMALAGFGVLLAL), 371-391 (YALLVLLVMFSMAGIPPLVGF), 404-424 (VGLTWLAVVGVVMSLIGAFYY), and 452-472 (LVLGVNGLVLLGLGILPNGLY).

The protein belongs to the complex I subunit 2 family. As to quaternary structure, NDH-1 is composed of 14 different subunits. Subunits NuoA, H, J, K, L, M, N constitute the membrane sector of the complex.

It is found in the cell inner membrane. It carries out the reaction a quinone + NADH + 5 H(+)(in) = a quinol + NAD(+) + 4 H(+)(out). Functionally, NDH-1 shuttles electrons from NADH, via FMN and iron-sulfur (Fe-S) centers, to quinones in the respiratory chain. The immediate electron acceptor for the enzyme in this species is believed to be ubiquinone. Couples the redox reaction to proton translocation (for every two electrons transferred, four hydrogen ions are translocated across the cytoplasmic membrane), and thus conserves the redox energy in a proton gradient. In Laribacter hongkongensis (strain HLHK9), this protein is NADH-quinone oxidoreductase subunit N.